Reading from the N-terminus, the 78-residue chain is Translational regulator CsrA (78 aa).

It belongs to the CsrA/RsmA family. As to quaternary structure, homodimer; the beta-strands of each monomer intercalate to form a hydrophobic core, while the alpha-helices form wings that extend away from the core.

It is found in the cytoplasm. Functionally, a translational regulator that binds mRNA to regulate translation initiation and/or mRNA stability. Usually binds in the 5'-UTR at or near the Shine-Dalgarno sequence preventing ribosome-binding, thus repressing translation. Its main target seems to be the major flagellin gene, while its function is anatagonized by FliW. The polypeptide is Translational regulator CsrA (Borrelia turicatae (strain 91E135)).